We begin with the raw amino-acid sequence, 1090 residues long: Exocyst complex component SEC5A (1090 aa).

Residues 18-128 (LKEQAKRDLT…ARKEDDGAWD (111 aa)) are disordered. The segment covering 45–69 (QQPRQQKPVAAAAAPPKKSAAAVRK) has biased composition (low complexity). Positions 109-124 (RGSDVREKGRARKEDD) are enriched in basic and acidic residues. Serine 180 carries the phosphoserine modification. Disordered stretches follow at residues 759 to 783 (TSRQ…NTYG), 987 to 1010 (VETP…DKQS), and 1046 to 1090 (APLE…PRRR). Positions 998–1009 (RGSEDTVSDDKQ) are enriched in basic and acidic residues. Residues 1058 to 1082 (TYSSFRGSMDSPSRNYRGSQSSGSP) are compositionally biased toward polar residues.

It belongs to the SEC5 family. As to quaternary structure, the exocyst complex is composed of SEC3, SEC5, SEC6, SEC8, SEC10, EXO70A1 and EXO84B. Interacts with SEC3A and EXO70B1. Binds to EXO70H1 and EXO70B2. Binds directly to B1L.

The protein localises to the cytoplasm. It is found in the cytosol. The protein resides in the secreted. It localises to the extracellular exosome. Its function is as follows. Component of the exocyst complex involved in the docking of exocytic vesicles with fusion sites on the plasma membrane during regulated or polarized secretion. Involved in polarized cell growth and organ morphogenesis. During cytokinesis, involved in cell plate initiation, cell plate maturation and formation of new primary cell wall. Probable component of an exocyst subcomplex specifically involved in autophagy-related, Golgi-independent membrane traffic to the vacuole. Regulates autophagosome formation and autophagy-related Golgi-independent import into the vacuole. This chain is Exocyst complex component SEC5A, found in Arabidopsis thaliana (Mouse-ear cress).